Consider the following 376-residue polypeptide: Beta-centractin (376 aa).

Met1 bears the N-acetylmethionine mark. At Tyr4 the chain carries 3'-nitrotyrosine.

The protein belongs to the actin family. ARP1 subfamily.

The protein resides in the cytoplasm. It localises to the cytoskeleton. The protein localises to the microtubule organizing center. It is found in the centrosome. Functionally, component of a multi-subunit complex involved in microtubule based vesicle motility. It is associated with the centrosome. The sequence is that of Beta-centractin (ACTR1B) from Homo sapiens (Human).